The following is a 368-amino-acid chain: o-succinylbenzoate synthase (368 aa).

The Proton donor role is filled by Lys-183. Mg(2+)-binding residues include Asp-213, Glu-239, and Asp-264. Lys-290 functions as the Proton acceptor in the catalytic mechanism.

The protein belongs to the mandelate racemase/muconate lactonizing enzyme family. MenC type 1 subfamily. In terms of assembly, monomer. The cofactor is a divalent metal cation.

It carries out the reaction (1R,6R)-6-hydroxy-2-succinyl-cyclohexa-2,4-diene-1-carboxylate = 2-succinylbenzoate + H2O. Its pathway is quinol/quinone metabolism; 1,4-dihydroxy-2-naphthoate biosynthesis; 1,4-dihydroxy-2-naphthoate from chorismate: step 4/7. It functions in the pathway cofactor biosynthesis; phylloquinone biosynthesis. Converts 2-succinyl-6-hydroxy-2,4-cyclohexadiene-1-carboxylate (SHCHC) to 2-succinylbenzoate (OSB). Does not show N-succinylamino acid racemase (NSAR) activity with N-succinyl-L-phenylglycine as substrate. The sequence is that of o-succinylbenzoate synthase from Desulfotalea psychrophila (strain LSv54 / DSM 12343).